We begin with the raw amino-acid sequence, 1197 residues long: Neural cell adhesion molecule L1.1 (1197 aa).

Ig-like C2-type domains follow at residues 1 to 58 (EFRQ…TAVS), 69 to 160 (PSLA…EPMS), 165 to 263 (PSNS…YTVT), 268 to 355 (PYWT…THVH), and 360 to 442 (PAQI…KSIS). Residues 1-1054 (EFRQRDPSPS…SPRNFATEGW (1054 aa)) are Extracellular-facing. C92 and C143 form a disulfide bridge. 8 N-linked (GlcNAc...) asparagine glycosylation sites follow: N135, N149, N221, N298, N414, N421, N438, and N449. 3 cysteine pairs are disulfide-bonded: C199-C247, C289-C339, and C383-C432. Residues 451-541 (TKIVGPPQNL…DSDTASGYIT (91 aa)) enclose the Ig-like C2-type 6 domain. C472 and C525 form a disulfide bridge. Fibronectin type-III domains lie at 548-643 (PPQS…TPAA), 645-742 (PDTN…SGED), 747-852 (APSA…TPEG), 853-952 (APGP…LLDG), and 953-1048 (EPPS…SPRN). Over residues 630–640 (APTESSLSYST) the composition is skewed to polar residues. Positions 630 to 655 (APTESSLSYSTPAAKPDTNPENVMTL) are disordered. N708 carries N-linked (GlcNAc...) asparagine glycosylation. N959, N968, N1002, and N1027 each carry an N-linked (GlcNAc...) asparagine glycan. The helical transmembrane segment at 1055-1075 (FIGLISALVLLLLVLLLLCYI) threads the bilayer. The Cytoplasmic segment spans residues 1076–1197 (KKSKGGKYSV…TSVTGILGPN (122 aa)). Disordered stretches follow at residues 1115 to 1135 (MEKCSISQPSGCESKRSSNDS) and 1154 to 1197 (IGQY…LGPN).

This sequence belongs to the immunoglobulin superfamily. L1/neurofascin/NgCAM family. Expressed in postmitotic neurons in 16-36 hours embryos, including those in the brain, cranial ganglia and otic and olfactory placodes, and in all classes of spinal neurons.

Its subcellular location is the cell membrane. The protein resides in the cell projection. The protein localises to the growth cone. Its function is as follows. Cell adhesion molecule with an important role in the development of the nervous system. Involved in neuron-neuron adhesion, neurite fasciculation, outgrowth of neurites, etc. Binds to axonin on neurons. The polypeptide is Neural cell adhesion molecule L1.1 (nadl1.1) (Danio rerio (Zebrafish)).